The chain runs to 509 residues: Dol-P-Glc:Glc(2)Man(9)GlcNAc(2)-PP-Dol alpha-1,2-glucosyltransferase (509 aa).

Residues 1 to 4 (MGKL) are Cytoplasmic-facing. A helical transmembrane segment spans residues 5-25 (AVAAITSLWVIPMSIIVNHIV). Over 26–57 (PEPYMDEIFHVPQAQQYCNGNFRSWDPMITTP) the chain is Lumenal. The helical transmembrane segment at 58–78 (PGLYYLSLAHVASLFPGMLLM) threads the bilayer. The Cytoplasmic portion of the chain corresponds to 79–99 (ENTSQSFSEACSTSVLRSTNA). The chain crosses the membrane as a helical span at residues 100–120 (VSAVLCGVLVYEIIRFLGPNL). Residues 121-124 (SDRK) lie on the Lumenal side of the membrane. A helical transmembrane segment spans residues 125–145 (ATFMALVMSLYPLHWFFTFLY). Over 146–170 (YTDVASLTAVLAMYLTCLKRRYVLS) the chain is Cytoplasmic. The helical transmembrane segment at 171-191 (ALFGTLAVFIRQTNVVWMLFV) threads the bilayer. Topologically, residues 192–285 (ACSGILDFTL…KWRILIKFSP (94 aa)) are lumenal. The segment at 210–254 (QEVNQELHQSSNKKGATLRSNLRKRKSDISSDTSDPFNHGQTVPS) is disordered. Composition is skewed to polar residues over residues 215-229 (ELHQ…TLRS) and 239-254 (SSDT…TVPS). A helical transmembrane segment spans residues 286–306 (FIFVVVAFGIFILWNGGIVLG). At 307–311 (AKEAH) the chain is on the cytoplasmic side. The helical transmembrane segment at 312–332 (VVSLHFAQIMYFSLVSALFTA) threads the bilayer. At 333-355 (PLHFSVNQLRHQFHQLHRNWSLS) the chain is on the lumenal side. N351 carries an N-linked (GlcNAc...) asparagine glycan. The helical transmembrane segment at 356–376 (LILTLVALVAGFVSVHFFSLA) threads the bilayer. Topologically, residues 377–400 (HPYLLADNRHYPFYLWRKIINAHW) are cytoplasmic. Residues 401–421 (LMKYILVPVYVYSWFSILTLL) traverse the membrane as a helical segment. Residues 422 to 428 (AKTRRQT) lie on the Lumenal side of the membrane. The helical transmembrane segment at 429-449 (WILVYFLATCGVLVPTPLIEF) threads the bilayer. The Cytoplasmic segment spans residues 450 to 472 (RYYTIPFYLFMLHSCVRSSSFAT). Residues 473 to 493 (WLLIGTIFVSINVFTMAMFLF) traverse the membrane as a helical segment. Topologically, residues 494–509 (RPFKWSHEDGVQRFIW) are lumenal.

Belongs to the ALG10 glucosyltransferase family.

It localises to the endoplasmic reticulum membrane. It catalyses the reaction an alpha-D-Glc-(1-&gt;3)-alpha-D-Glc-(1-&gt;3)-alpha-D-Man-(1-&gt;2)-alpha-D-Man-(1-&gt;2)-alpha-D-Man-(1-&gt;3)-[alpha-D-Man-(1-&gt;2)-alpha-D-Man-(1-&gt;3)-[alpha-D-Man-(1-&gt;2)-alpha-D-Man-(1-&gt;6)]-alpha-D-Man-(1-&gt;6)]-beta-D-Man-(1-&gt;4)-beta-D-GlcNAc-(1-&gt;4)-alpha-D-GlcNAc-diphospho-di-trans,poly-cis-dolichol + a di-trans,poly-cis-dolichyl beta-D-glucosyl phosphate = a alpha-D-Glc-(1-&gt;2)-alpha-D-Glc-(1-&gt;3)-alpha-D-Glc-(1-&gt;3)-alpha-D-Man-(1-&gt;2)-alpha-D-Man-(1-&gt;2)-alpha-D-Man-(1-&gt;3)-[alpha-D-Man-(1-&gt;2)-alpha-D-Man-(1-&gt;3)-[alpha-D-Man-(1-&gt;2)-alpha-D-Man-(1-&gt;6)]-alpha-D-Man-(1-&gt;6)]-beta-D-Man-(1-&gt;4)-beta-D-GlcNAc-(1-&gt;4)-alpha-D-GlcNAc-diphospho-di-trans,poly-cis-dolichol + a di-trans,poly-cis-dolichyl phosphate + H(+). It participates in protein modification; protein glycosylation. In terms of biological role, dol-P-Glc:Glc(2)Man(9)GlcNAc(2)-PP-Dol alpha-1,2-glucosyltransferase that operates in the biosynthetic pathway of dolichol-linked oligosaccharides, the glycan precursors employed in protein asparagine (N)-glycosylation. The assembly of dolichol-linked oligosaccharides begins on the cytosolic side of the endoplasmic reticulum membrane and finishes in its lumen. The sequential addition of sugars to dolichol pyrophosphate produces dolichol-linked oligosaccharides containing fourteen sugars, including two GlcNAcs, nine mannoses and three glucoses. Once assembled, the oligosaccharide is transferred from the lipid to nascent proteins by oligosaccharyltransferases. In the lumen of the endoplasmic reticulum, adds the third and last glucose residue from dolichyl phosphate glucose (Dol-P-Glc) onto the lipid-linked oligosaccharide intermediate Glc(2)Man(9)GlcNAc(2)-PP-Dol to produce Glc(3)Man(9)GlcNAc(2)-PP-Dol. This Arabidopsis thaliana (Mouse-ear cress) protein is Dol-P-Glc:Glc(2)Man(9)GlcNAc(2)-PP-Dol alpha-1,2-glucosyltransferase.